The chain runs to 219 residues: Ribose-5-phosphate isomerase A (219 aa).

Residues 28–31 (SGST), 81–84 (DGAD), and 94–97 (KGGG) contribute to the substrate site. Catalysis depends on Glu103, which acts as the Proton acceptor. Lys121 lines the substrate pocket.

Belongs to the ribose 5-phosphate isomerase family. As to quaternary structure, homodimer.

The enzyme catalyses aldehydo-D-ribose 5-phosphate = D-ribulose 5-phosphate. It functions in the pathway carbohydrate degradation; pentose phosphate pathway; D-ribose 5-phosphate from D-ribulose 5-phosphate (non-oxidative stage): step 1/1. Catalyzes the reversible conversion of ribose-5-phosphate to ribulose 5-phosphate. This chain is Ribose-5-phosphate isomerase A, found in Glaesserella parasuis serovar 5 (strain SH0165) (Haemophilus parasuis).